A 260-amino-acid polypeptide reads, in one-letter code: Kallikrein-8 (260 aa).

A signal peptide spans 1-28 (MGRPRPRAAKTWMFLLLLGGAWAGHSRA). Residues 29–32 (QEDK) constitute a propeptide that is removed on maturation. Residues 33 to 257 (VLGGHECQPH…YLDWIKKIIG (225 aa)) form the Peptidase S1 domain. Disulfide bonds link Cys39–Cys173, Cys58–Cys74, Cys145–Cys246, Cys152–Cys218, Cys184–Cys198, and Cys208–Cys233. His73 (charge relay system) is an active-site residue. Residue Asn110 is glycosylated (N-linked (GlcNAc...) asparagine). Asp120 serves as the catalytic Charge relay system. Ser212 functions as the Charge relay system in the catalytic mechanism.

It belongs to the peptidase S1 family. Kallikrein subfamily. Interacts with SPINK9. In terms of tissue distribution, isoform 1 is predominantly expressed in the pancreas. Isoform 2 is expressed in adult brain and hippocampus. Isoform 1 and isoform 2 are found in fetal brain and placenta. Detected in salivary gland, uterus, thymus, breast, testis and kidney but not in spleen, liver, lung or normal ovarian tissue. Displays an 11.5-fold increase in Alzheimer disease hippocampus compared to controls and is overexpressed in some ovarian carcinomas. Expressed at low levels in normal skin while high levels are found in psoriasis vulgaris, seborrheic keratosis, lichen planus and squamous cell carcinoma skin samples. Expressed in the keratinocytes.

The protein resides in the secreted. It is found in the cytoplasm. It carries out the reaction Cleavage of amide substrates following the basic amino acids Arg or Lys at the P1 position, with a preference for Arg over Lys.. Inhibited by a range of serine protease inhibitors including antipain, aprotinin, leupeptin, benzamidine and soybean trypsin inhibitor. Its function is as follows. Serine protease which is capable of degrading a number of proteins such as casein, fibrinogen, kininogen, fibronectin and collagen type IV. Also cleaves L1CAM in response to increased neural activity. Induces neurite outgrowth and fasciculation of cultured hippocampal neurons. Plays a role in the formation and maturation of orphan and small synaptic boutons in the Schaffer-collateral pathway, regulates Schaffer-collateral long-term potentiation in the hippocampus and is required for memory acquisition and synaptic plasticity. Involved in skin desquamation and keratinocyte proliferation. Plays a role in the secondary phase of pathogenesis following spinal cord injury. The protein is Kallikrein-8 (KLK8) of Homo sapiens (Human).